Here is a 204-residue protein sequence, read N- to C-terminus: Ribosomal RNA small subunit methyltransferase G (204 aa).

S-adenosyl-L-methionine is bound by residues glycine 69, phenylalanine 74, 123–124 (IE), and arginine 137.

The protein belongs to the methyltransferase superfamily. RNA methyltransferase RsmG family.

It localises to the cytoplasm. It catalyses the reaction guanosine(527) in 16S rRNA + S-adenosyl-L-methionine = N(7)-methylguanosine(527) in 16S rRNA + S-adenosyl-L-homocysteine. In terms of biological role, specifically methylates the N7 position of guanine in position 527 of 16S rRNA. The chain is Ribosomal RNA small subunit methyltransferase G from Ruegeria pomeroyi (strain ATCC 700808 / DSM 15171 / DSS-3) (Silicibacter pomeroyi).